Consider the following 88-residue polypeptide: MKKARFTETQILRVLKEVEGGRHVKDVCRENGGSEASYYNWKSKYGGMESSDIKRMKEREEENRRLKQMYASLSLDHEILKDVVAKKL.

This sequence belongs to the transposase 8 family.

In Yersinia pestis, this protein is Low calcium response locus protein S (lcrS).